Here is a 72-residue protein sequence, read N- to C-terminus: Translation initiation factor IF-1 (72 aa).

Positions Met1–Lys72 constitute an S1-like domain.

It belongs to the IF-1 family. In terms of assembly, component of the 30S ribosomal translation pre-initiation complex which assembles on the 30S ribosome in the order IF-2 and IF-3, IF-1 and N-formylmethionyl-tRNA(fMet); mRNA recruitment can occur at any time during PIC assembly.

It is found in the cytoplasm. Its function is as follows. One of the essential components for the initiation of protein synthesis. Stabilizes the binding of IF-2 and IF-3 on the 30S subunit to which N-formylmethionyl-tRNA(fMet) subsequently binds. Helps modulate mRNA selection, yielding the 30S pre-initiation complex (PIC). Upon addition of the 50S ribosomal subunit IF-1, IF-2 and IF-3 are released leaving the mature 70S translation initiation complex. In Parabacteroides distasonis (strain ATCC 8503 / DSM 20701 / CIP 104284 / JCM 5825 / NCTC 11152), this protein is Translation initiation factor IF-1.